The sequence spans 839 residues: Taste receptor type 1 member 2 (839 aa).

Positions 1-19 (MGPRATTICSLFFLLWVLA) are cleaved as a signal peptide. Topologically, residues 20-566 (EPAENSDFYL…AFLEWHEAPT (547 aa)) are extracellular. Residues N84, N248, N292, N312, N368, N428, N487, and N527 are each glycosylated (N-linked (GlcNAc...) asparagine). The helical transmembrane segment at 567 to 587 (IAVALLAALGFLSTLAILVIF) threads the bilayer. The Cytoplasmic portion of the chain corresponds to 588–602 (WRHFQTPMVRSAGGP). Residues 603 to 623 (MCFLMLTLLLVAYMVVPVYVG) form a helical membrane-spanning segment. Residues 624–635 (PPKVSTCLCRQA) are Extracellular-facing. A helical transmembrane segment spans residues 636 to 656 (LFPLCFTICISCIAVRSFQII). Topologically, residues 657-681 (CAFKMASRFPRAYSYWVRYQGPYVS) are cytoplasmic. The chain crosses the membrane as a helical span at residues 682 to 702 (MAFITVLKMVIVVIGMLATGL). The Extracellular segment spans residues 703–727 (NPTTRTDPDDPKIMIVSCNPNYRNS). A helical membrane pass occupies residues 728–748 (LLFNTSLDLLLSVVGFSFANM). Residues 749–760 (GKELPTNYNEAK) are Cytoplasmic-facing. Residues 761–781 (FITLSMTFYFTSSISLCTFMS) traverse the membrane as a helical segment. The Extracellular portion of the chain corresponds to 782–784 (AYS). Residues 785-805 (GVLVTIVDLLVTVLNLLAISL) form a helical membrane-spanning segment. Residues 806–839 (GYFGPKCYMILFYPERNTPAYFNSVIQGYTMTRD) are Cytoplasmic-facing.

Belongs to the G-protein coupled receptor 3 family. TAS1R subfamily. Forms heterodimers with TAS1R3.

It is found in the cell membrane. Its function is as follows. Putative taste receptor. TAS1R2/TAS1R3 recognizes diverse natural and synthetic sweeteners. In Pongo pygmaeus (Bornean orangutan), this protein is Taste receptor type 1 member 2 (TAS1R2).